Consider the following 115-residue polypeptide: MRLYINEIKIKDDILYCYTEDSIKGLSEVGQMLVDSDNYAFAYTLDDGKAYAYLIFVQETWTMLHENTTKKIIINDELELTEFHQELTYILDNIKGNNNYGKEFVATVEETFDIE.

It belongs to the UPF0738 family.

The polypeptide is UPF0738 protein SAV1005 (Staphylococcus aureus (strain Mu50 / ATCC 700699)).